The sequence spans 456 residues: Serine--tRNA ligase (456 aa).

Residues 49 to 69 form a disordered region; the sequence is HERNEVSSTIGELKQAGEEEA. 241 to 243 is an L-serine binding site; that stretch reads TAE. Residues 272–274 and Val-288 contribute to the ATP site; that span reads RQE. An L-serine-binding site is contributed by Glu-295. 368 to 371 contributes to the ATP binding site; that stretch reads EVSS. L-serine is bound at residue Ser-404.

Belongs to the class-II aminoacyl-tRNA synthetase family. Type-1 seryl-tRNA synthetase subfamily. In terms of assembly, homodimer. The tRNA molecule binds across the dimer.

It localises to the cytoplasm. It carries out the reaction tRNA(Ser) + L-serine + ATP = L-seryl-tRNA(Ser) + AMP + diphosphate + H(+). The enzyme catalyses tRNA(Sec) + L-serine + ATP = L-seryl-tRNA(Sec) + AMP + diphosphate + H(+). It functions in the pathway aminoacyl-tRNA biosynthesis; selenocysteinyl-tRNA(Sec) biosynthesis; L-seryl-tRNA(Sec) from L-serine and tRNA(Sec): step 1/1. Its function is as follows. Catalyzes the attachment of serine to tRNA(Ser). Is also able to aminoacylate tRNA(Sec) with serine, to form the misacylated tRNA L-seryl-tRNA(Sec), which will be further converted into selenocysteinyl-tRNA(Sec). In Halorubrum lacusprofundi (strain ATCC 49239 / DSM 5036 / JCM 8891 / ACAM 34), this protein is Serine--tRNA ligase.